Here is a 325-residue protein sequence, read N- to C-terminus: DNA-directed RNA polymerase subunit alpha (325 aa).

The alpha N-terminal domain (alpha-NTD) stretch occupies residues 1 to 231 (MQNSLLKPRI…DQLNVFAALE (231 aa)). Positions 246–325 (VDPILLRPVD…ENWPPAGLEK (80 aa)) are alpha C-terminal domain (alpha-CTD).

The protein belongs to the RNA polymerase alpha chain family. In terms of assembly, homodimer. The RNAP catalytic core consists of 2 alpha, 1 beta, 1 beta' and 1 omega subunit. When a sigma factor is associated with the core the holoenzyme is formed, which can initiate transcription.

The enzyme catalyses RNA(n) + a ribonucleoside 5'-triphosphate = RNA(n+1) + diphosphate. Its function is as follows. DNA-dependent RNA polymerase catalyzes the transcription of DNA into RNA using the four ribonucleoside triphosphates as substrates. The chain is DNA-directed RNA polymerase subunit alpha from Janthinobacterium sp. (strain Marseille) (Minibacterium massiliensis).